The sequence spans 158 residues: 6,7-dimethyl-8-ribityllumazine synthase (158 aa).

5-amino-6-(D-ribitylamino)uracil contacts are provided by residues F22, 57 to 59, and 81 to 83; these read AFE and AVI. 86-87 is a binding site for (2S)-2-hydroxy-3-oxobutyl phosphate; the sequence is GT. The active-site Proton donor is H89. F114 is a binding site for 5-amino-6-(D-ribitylamino)uracil. R128 is a (2S)-2-hydroxy-3-oxobutyl phosphate binding site.

The protein belongs to the DMRL synthase family. As to quaternary structure, forms an icosahedral capsid composed of 60 subunits, arranged as a dodecamer of pentamers.

The catalysed reaction is (2S)-2-hydroxy-3-oxobutyl phosphate + 5-amino-6-(D-ribitylamino)uracil = 6,7-dimethyl-8-(1-D-ribityl)lumazine + phosphate + 2 H2O + H(+). Its pathway is cofactor biosynthesis; riboflavin biosynthesis; riboflavin from 2-hydroxy-3-oxobutyl phosphate and 5-amino-6-(D-ribitylamino)uracil: step 1/2. In terms of biological role, catalyzes the formation of 6,7-dimethyl-8-ribityllumazine by condensation of 5-amino-6-(D-ribitylamino)uracil with 3,4-dihydroxy-2-butanone 4-phosphate. This is the penultimate step in the biosynthesis of riboflavin. The polypeptide is 6,7-dimethyl-8-ribityllumazine synthase (Shewanella amazonensis (strain ATCC BAA-1098 / SB2B)).